Here is a 161-residue protein sequence, read N- to C-terminus: Pupal cuticle protein C1B (161 aa).

9 tandem repeats follow at residues 6–9 (AAPA), 14–17 (AAPA), 35–38 (AAPA), 87–90 (AAPV), 103–106 (AAPV), 112–115 (AAPV), 121–124 (AAPV), 130–133 (AAPV), and 143–146 (AAPA).

Its function is as follows. Component of the cuticle of the pupa of Tenebrio molitor. This Tenebrio molitor (Yellow mealworm beetle) protein is Pupal cuticle protein C1B.